The chain runs to 507 residues: MTLFRSGIILAFLTFIARIFGLVREQFIASLFGSTPMGDSMNIAFKLPNLFRRIFAEGALSSVFIPIYNEKMLISKKAANNFSGKVFTLLSLTLIVIIALMQIFMPQLILCIAPGFYAKKEKFELTVFLCRITIPYLIFVSLTALLGGILNSVKKFAAFAFSPIILSVCVIIFTLIFGNYIESTISISVSLIIAGILQVVFMFICVKKADLHFPIIFHTNDPDVKKLLINMGPATISSGVQQLNLFISQSISSFIEGAISILAYADRIYQFPLSIIGTSFSTILLPEMSKVYKSNDIVSAQKIQNNAIRIGLLLSLPATFGIIILSHPITNIIYERGVFTPQDTTNTAEAISAFALGLPAFILAKILTPIFYANGDTKTPLKITLFSIIINTNMNLLLMDSLKHIGIAVGTSIAAWYNLGLLYSYSTKQHKLHIEAGIKLFCAKILLCCTLMSIIIALIKHYYLEYLYSEYLLIKVSMLGSTIIIGVAIFFGTAYLLKVVNYDNSTK.

Helical transmembrane passes span 3–23 (LFRS…FGLV), 54–74 (IFAE…KMLI), 92–112 (LTLI…ILCI), 132–152 (ITIP…ILNS), 156–176 (FAAF…FTLI), 185–205 (ISIS…MFIC), 268–288 (IYQF…LPEM), 310–330 (IGLL…HPIT), 351–371 (ISAF…TPIF), 379–399 (TPLK…LLLM), 405–425 (IGIA…LYSY), 438–458 (IKLF…IIAL), and 472–492 (LLIK…IFFG).

It belongs to the MurJ/MviN family.

The protein localises to the cell inner membrane. The protein operates within cell wall biogenesis; peptidoglycan biosynthesis. Its function is as follows. Involved in peptidoglycan biosynthesis. Transports lipid-linked peptidoglycan precursors from the inner to the outer leaflet of the cytoplasmic membrane. In Rickettsia prowazekii (strain Madrid E), this protein is Probable lipid II flippase MurJ.